Here is a 365-residue protein sequence, read N- to C-terminus: Peridinin-chlorophyll a-binding protein, chloroplastic (365 aa).

Residues 1–52 constitute a chloroplast transit peptide; sequence MVRGARKAIAVGVAVAVACGLQKHLNFVPGPRHAAPVAAAAASMMMAPAAFA. 2 tandem repeats follow at residues 53-215 and 216-365.

In terms of assembly, monomer.

The protein resides in the plastid. It localises to the chloroplast. Its function is as follows. Water-soluble antenna for capture of solar energy in the blue-green range. Peridinin is an asymmetric carotenoid. This Symbiodinium sp. (Dinoflagellate) protein is Peridinin-chlorophyll a-binding protein, chloroplastic.